The primary structure comprises 146 residues: D-aminoacyl-tRNA deacylase (146 aa).

The Gly-cisPro motif, important for rejection of L-amino acids signature appears at 138-139 (GP).

Belongs to the DTD family. As to quaternary structure, homodimer.

It localises to the cytoplasm. The catalysed reaction is glycyl-tRNA(Ala) + H2O = tRNA(Ala) + glycine + H(+). The enzyme catalyses a D-aminoacyl-tRNA + H2O = a tRNA + a D-alpha-amino acid + H(+). Functionally, an aminoacyl-tRNA editing enzyme that deacylates mischarged D-aminoacyl-tRNAs. Also deacylates mischarged glycyl-tRNA(Ala), protecting cells against glycine mischarging by AlaRS. Acts via tRNA-based rather than protein-based catalysis; rejects L-amino acids rather than detecting D-amino acids in the active site. By recycling D-aminoacyl-tRNA to D-amino acids and free tRNA molecules, this enzyme counteracts the toxicity associated with the formation of D-aminoacyl-tRNA entities in vivo and helps enforce protein L-homochirality. The polypeptide is D-aminoacyl-tRNA deacylase (Stenotrophomonas maltophilia (strain K279a)).